We begin with the raw amino-acid sequence, 311 residues long: 2-methoxy-6-polyprenyl-1,4-benzoquinol methylase, mitochondrial (311 aa).

A mitochondrion-targeting transit peptide spans 1–29 (MAAGLCPGRALLSRRGGALWALLGTARGR). S-adenosyl-L-methionine-binding positions include Thr-100, Asp-155, and 183 to 184 (NA).

This sequence belongs to the class I-like SAM-binding methyltransferase superfamily. MenG/UbiE family. Component of a multi-subunit COQ enzyme complex, composed of at least COQ3, COQ4, COQ5, COQ6, COQ7 and COQ9.

It is found in the mitochondrion inner membrane. It carries out the reaction a 2-methoxy-6-(all-trans-polyprenyl)benzene-1,4-diol + S-adenosyl-L-methionine = a 5-methoxy-2-methyl-3-(all-trans-polyprenyl)benzene-1,4-diol + S-adenosyl-L-homocysteine + H(+). Its pathway is cofactor biosynthesis; ubiquinone biosynthesis. Methyltransferase required for the conversion of 2-polyprenyl-6-methoxy-1,4-benzoquinol (DDMQH2) to 2-polyprenyl-3-methyl-6-methoxy-1,4-benzoquinol (DMQH2). The protein is 2-methoxy-6-polyprenyl-1,4-benzoquinol methylase, mitochondrial of Gallus gallus (Chicken).